Here is a 697-residue protein sequence, read N- to C-terminus: Probable potassium transporter 4 (697 aa).

The Cytoplasmic segment spans residues 1–29; the sequence is MSSSHTVTVSMDVEAGQKNKDKKGISQDL. The chain crosses the membrane as a helical span at residues 30-50; it reads ILAYKTLGVVFGGLVTSPLYV. Residues 51 to 66 lie on the Extracellular side of the membrane; that stretch reads YPSMNLTNPTEEDYLG. N55 carries N-linked (GlcNAc...) asparagine glycosylation. The chain crosses the membrane as a helical span at residues 67–87; it reads IYSIMFWTLTLIGVVKYICIA. Topologically, residues 88–152 are cytoplasmic; sequence LNADDHGEGG…FIESSIIARR (65 aa). A helical membrane pass occupies residues 153–173; it reads LLLLTAILGMCMLIGDGILTP. At 174-189 the chain is on the extracellular side; that stretch reads AISVLSAIDGLRGPFP. A helical membrane pass occupies residues 190–210; the sequence is SVSKPAVEGLSAAILVGLFLL. At 211–217 the chain is on the cytoplasmic side; the sequence is QKYGTSK. The chain crosses the membrane as a helical span at residues 218–238; that stretch reads VSFMFSPIMAAWTFATPVIGV. Over 239 to 271 the chain is Extracellular; that stretch reads YSIWRYYPGIFKAMSPHYIVRFFMTNQTRGWQL. N-linked (GlcNAc...) asparagine glycosylation occurs at N264. A helical transmembrane segment spans residues 272-292; the sequence is LGGTVLCITGAEAMFADLGHF. The Cytoplasmic portion of the chain corresponds to 293–300; it reads SKRSIQIA. Residues 301 to 321 form a helical membrane-spanning segment; the sequence is FMSSIYPSLVLTYAGQTAYLI. Over 322–338 the chain is Extracellular; sequence NNVDDFSDGFYKFVPRP. Residues 339-359 form a helical membrane-spanning segment; sequence VYWPMFIIATLAAIVASQSLI. The Cytoplasmic portion of the chain corresponds to 360 to 390; it reads SATFSVIKQSVVLDYFPRVKVVHTSKDKEGE. Residues 391–411 form a helical membrane-spanning segment; that stretch reads VYSPETNYMLMLLCVGVILGF. The Extracellular portion of the chain corresponds to 412–422; the sequence is GDGKDIGNAFG. A helical transmembrane segment spans residues 423 to 443; sequence VVVILVMLITTILLTLVMLII. The Cytoplasmic portion of the chain corresponds to 444–447; it reads WGTH. The chain crosses the membrane as a helical span at residues 448-468; the sequence is VVLVALYLVPFLLLEATYVSA. The Extracellular segment spans residues 469–475; it reads VCTKILR. Residues 476–496 traverse the membrane as a helical segment; sequence GGWVPFAVSVALAAVMFGWYY. Topologically, residues 497–697 are cytoplasmic; sequence GRQRKTEYEA…RVEIGMLYKA (201 aa).

Belongs to the HAK/KUP transporter (TC 2.A.72.3) family.

It localises to the membrane. Its function is as follows. High-affinity potassium transporter. This chain is Probable potassium transporter 4 (HAK4), found in Oryza sativa subsp. japonica (Rice).